The primary structure comprises 406 residues: Probable delta-aminolevulinic acid dehydratase 2, chloroplastic (406 aa).

The N-terminal 34 residues, M1–R34, are a transit peptide targeting the chloroplast. K275 serves as the catalytic Schiff-base intermediate with substrate. Residues R285 and K291 each coordinate 5-aminolevulinate. E307 is a Mg(2+) binding site. K322 serves as the catalytic Schiff-base intermediate with substrate. S348 and Y387 together coordinate 5-aminolevulinate.

This sequence belongs to the ALAD family. As to quaternary structure, homooctamer. Requires Mg(2+) as cofactor.

The protein localises to the plastid. It localises to the chloroplast. It catalyses the reaction 2 5-aminolevulinate = porphobilinogen + 2 H2O + H(+). It functions in the pathway porphyrin-containing compound metabolism; protoporphyrin-IX biosynthesis; coproporphyrinogen-III from 5-aminolevulinate: step 1/4. It participates in porphyrin-containing compound metabolism; chlorophyll biosynthesis. Its function is as follows. Catalyzes an early step in the biosynthesis of tetrapyrroles. Binds two molecules of 5-aminolevulinate per subunit, each at a distinct site, and catalyzes their condensation to form porphobilinogen. This chain is Probable delta-aminolevulinic acid dehydratase 2, chloroplastic (HEMB2), found in Arabidopsis thaliana (Mouse-ear cress).